The chain runs to 321 residues: p-hydroxybenzoic acid efflux pump subunit AaeA (321 aa).

The helical transmembrane segment at 22–42 (VVITLVIVLCAIVAIFRVWAF) threads the bilayer.

The protein belongs to the membrane fusion protein (MFP) (TC 8.A.1) family.

The protein resides in the cell inner membrane. Functionally, forms an efflux pump with AaeB. In Pectobacterium atrosepticum (strain SCRI 1043 / ATCC BAA-672) (Erwinia carotovora subsp. atroseptica), this protein is p-hydroxybenzoic acid efflux pump subunit AaeA.